The chain runs to 137 residues: NADH-quinone oxidoreductase subunit A (137 aa).

The next 3 helical transmembrane spans lie at 12-32, 66-86, and 96-116; these read WGFA…LGVS, FYLV…LFAW, and TGFV…VYLF.

It belongs to the complex I subunit 3 family. As to quaternary structure, NDH-1 is composed of 13 different subunits. Subunits NuoA, H, J, K, L, M, N constitute the membrane sector of the complex.

The protein resides in the cell inner membrane. It catalyses the reaction a quinone + NADH + 5 H(+)(in) = a quinol + NAD(+) + 4 H(+)(out). NDH-1 shuttles electrons from NADH, via FMN and iron-sulfur (Fe-S) centers, to quinones in the respiratory chain. The immediate electron acceptor for the enzyme in this species is believed to be ubiquinone. Couples the redox reaction to proton translocation (for every two electrons transferred, four hydrogen ions are translocated across the cytoplasmic membrane), and thus conserves the redox energy in a proton gradient. This is NADH-quinone oxidoreductase subunit A from Pseudomonas fluorescens (strain Pf0-1).